The following is a 306-amino-acid chain: MNNLEERGHLLTEQINPNSQNLDQLSSLELVELFNAEDAQTLKAIAGAKLELAKAIEVISEALRQGGRLFYVGAGTSGRLGVLDAAECPPTFCTPPEMVQGIIAGGAQALIRSSEDLEDKLEDGASIIAQREITPLDVVVGITAGGTTPFVHGALMAAKTRRATTIAISCVPVEQVSIEADIDIRLLTGPEILAGSTRLKAGTVTKMALNILSTGAMVQLGKVYGNRMIDVAVTNRKLHDRALRIIQDLTDLNRTEAGSLLERSGRQVKLALLMHSLGVDAETGAHLLATHHGNLRAALNSALLKD.

An SIS domain is found at 59 to 222; it reads ISEALRQGGR…STGAMVQLGK (164 aa). Glutamate 87 serves as the catalytic Proton donor. Glutamate 118 is an active-site residue.

Belongs to the GCKR-like family. MurNAc-6-P etherase subfamily. In terms of assembly, homodimer.

It carries out the reaction N-acetyl-D-muramate 6-phosphate + H2O = N-acetyl-D-glucosamine 6-phosphate + (R)-lactate. Its pathway is amino-sugar metabolism; N-acetylmuramate degradation. Functionally, specifically catalyzes the cleavage of the D-lactyl ether substituent of MurNAc 6-phosphate, producing GlcNAc 6-phosphate and D-lactate. The protein is N-acetylmuramic acid 6-phosphate etherase of Gloeothece citriformis (strain PCC 7424) (Cyanothece sp. (strain PCC 7424)).